Consider the following 105-residue polypeptide: Heat shock protein HspQ (105 aa).

Residues 75-105 are disordered; it reads SELQDEHPEQPSMDELAQTIRKQLQAPRLRN.

Belongs to the HspQ family.

The protein localises to the cytoplasm. Involved in the degradation of certain denaturated proteins, including DnaA, during heat shock stress. The polypeptide is Heat shock protein HspQ (Escherichia coli O127:H6 (strain E2348/69 / EPEC)).